We begin with the raw amino-acid sequence, 458 residues long: Probable multidrug resistance protein NorM (458 aa).

12 helical membrane-spanning segments follow: residues 14 to 34 (FLVVMMPILITQIGLYAMNFF), 56 to 76 (LWVPVFTGLNGVLLALTPIIA), 97 to 117 (LSIAISIAVILIGAVVLDPIL), 134 to 154 (LIGLAFGIVPLFIYTTIRCLI), 164 to 184 (MFITLLSLPINIFFNYVLIFG), 196 to 216 (AGYASAITYWFILAVAIVVVV), 241 to 261 (ILLLGLPIGFTIFFETSIFAA), 283 to 303 (FASFLYMIPLSIAFTLTIAVG), 320 to 340 (LGITFALIMGLVAGVIIYVLR), 353 to 373 (VAWLIQQFLIYSIFFQLSDAL), 389 to 409 (VPFVMALVSFWIIGLPTGYLL), and 415 to 435 (LGPYGYWIGLITGLASCAIAL).

This sequence belongs to the multi antimicrobial extrusion (MATE) (TC 2.A.66.1) family.

The protein localises to the cell membrane. Multidrug efflux pump. In Halalkalibacterium halodurans (strain ATCC BAA-125 / DSM 18197 / FERM 7344 / JCM 9153 / C-125) (Bacillus halodurans), this protein is Probable multidrug resistance protein NorM (norM).